The chain runs to 567 residues: DNA ligase B (567 aa).

K132 acts as the N6-AMP-lysine intermediate in catalysis.

It belongs to the NAD-dependent DNA ligase family. LigB subfamily.

The enzyme catalyses NAD(+) + (deoxyribonucleotide)n-3'-hydroxyl + 5'-phospho-(deoxyribonucleotide)m = (deoxyribonucleotide)n+m + AMP + beta-nicotinamide D-nucleotide.. Its function is as follows. Catalyzes the formation of phosphodiester linkages between 5'-phosphoryl and 3'-hydroxyl groups in double-stranded DNA using NAD as a coenzyme and as the energy source for the reaction. This Yersinia pseudotuberculosis serotype IB (strain PB1/+) protein is DNA ligase B.